Here is a 256-residue protein sequence, read N- to C-terminus: Hydroxyacylglutathione hydrolase (256 aa).

Zn(2+) contacts are provided by His57, His59, Asp61, His62, His115, Asp134, and His172.

It belongs to the metallo-beta-lactamase superfamily. Glyoxalase II family. In terms of assembly, monomer. Requires Zn(2+) as cofactor.

It carries out the reaction an S-(2-hydroxyacyl)glutathione + H2O = a 2-hydroxy carboxylate + glutathione + H(+). It functions in the pathway secondary metabolite metabolism; methylglyoxal degradation; (R)-lactate from methylglyoxal: step 2/2. In terms of biological role, thiolesterase that catalyzes the hydrolysis of S-D-lactoyl-glutathione to form glutathione and D-lactic acid. This chain is Hydroxyacylglutathione hydrolase, found in Rhizobium etli (strain ATCC 51251 / DSM 11541 / JCM 21823 / NBRC 15573 / CFN 42).